Consider the following 296-residue polypeptide: Large ribosomal subunit protein uL15m (296 aa).

The N-terminal 20 residues, 1–20 (MSLIKKPGGKTIEVVKNLPR), are a transit peptide targeting the mitochondrion. The segment at 25–59 (NLRPNPGAKTLEKRRGRGMHGGNRSGWGHKGERQR) is disordered.

It belongs to the universal ribosomal protein uL15 family. In terms of assembly, component of the mitochondrial ribosome large subunit (39S) which comprises a 16S rRNA and about 50 distinct proteins.

Its subcellular location is the mitochondrion. This chain is Large ribosomal subunit protein uL15m (mrpl15), found in Danio rerio (Zebrafish).